A 233-amino-acid chain; its full sequence is Glycolipid transfer protein 3 (233 aa).

The a ganglioside GM3 (d18:1(4E)) site is built by Asp-79, Asn-83, Trp-126, and His-165.

Belongs to the GLTP family.

In terms of biological role, may be involved in glycolipids transfer. In Arabidopsis thaliana (Mouse-ear cress), this protein is Glycolipid transfer protein 3.